A 140-amino-acid chain; its full sequence is Putative nickel-responsive regulator 2 (140 aa).

Ni(2+) contacts are provided by H77, H88, H90, and C96.

The protein belongs to the transcriptional regulatory CopG/NikR family. The cofactor is Ni(2+).

In terms of biological role, transcriptional regulator. The chain is Putative nickel-responsive regulator 2 from Methanothermobacter thermautotrophicus (strain ATCC 29096 / DSM 1053 / JCM 10044 / NBRC 100330 / Delta H) (Methanobacterium thermoautotrophicum).